The primary structure comprises 464 residues: Delta(5) fatty acid desaturase A (464 aa).

The Cytochrome b5 heme-binding domain maps to 13-90 (GKQYSWSELA…LKNYEIGYIS (78 aa)). His-48 and His-71 together coordinate heme. 2 consecutive transmembrane segments (helical) span residues 125 to 145 (AVSI…TYYL) and 153 to 173 (FYLN…FSMH). Positions 176–180 (HDSCH) match the Histidine box-1 motif. Positions 212-217 (HVIGHH) match the Histidine box-2 motif. Residues 318–338 (FTDLICYFLIAEFVFGWYLTI) form a helical membrane-spanning segment. The short motif at 396-400 (QVVHH) is the Histidine box-3 element.

This sequence belongs to the fatty acid desaturase type 1 family. Fe cation serves as cofactor.

It localises to the membrane. Specific for desaturation of the 5 position in C16 and C18 fatty acids. In Dictyostelium discoideum (Social amoeba), this protein is Delta(5) fatty acid desaturase A (fadA).